Here is a 518-residue protein sequence, read N- to C-terminus: MWKWKVILLFLAEMFVSGVNGDCACYEANNVTGKSAPISNSYMTEDFSPCYLPCSYVAYSGDETYGWTGLVLNWKTTTNSGGIIQIFDGPSATGTPIIQVAEGETIAAGIGKSLIKSSLPVITIKYSQTGSGASMFILNINNGTFVTNVYYGSISTAAGLAPIAVSTTTTAMPTTRSYSNPNFAYDPYFITHDIFVVINQRTSGGMAALTSLNALAINFVTLLSTTTDINSVSSSRLSLATLTPYDPYYSVQGGIWELSATDVLNNVPRSGVTIEGDIDSALIGLADLAFTVNKNASTDTRNNVQRSVVLLTAEWPSNALLGDNVASKFTELGLNLLVVGYNLTDAETSQLLRTDRWYNAINSSDSKITNVAAFVNPFYFNNGANNFWCPPFGITNSVDGTYSWFQEPYNYTGPHGINGVWTDPFDGQTGRYCNFANNQYVYQNNAGGSVKVQVYFELEAGKDFLNFYDASNNLIASFTGYEIAGSSFFTSTTTLTARFTSDNKSIFRGFWVSITPQP.

Residues 1 to 21 form the signal peptide; that stretch reads MWKWKVILLFLAEMFVSGVNG. N-linked (GlcNAc...) asparagine glycosylation is found at Asn-30, Asn-142, Asn-295, Asn-342, Asn-362, Asn-410, and Asn-503. One can recognise a CUB domain in the interval 389–517; that stretch reads CPPFGITNSV…RGFWVSITPQ (129 aa).

It is found in the secreted. This is an uncharacterized protein from Caenorhabditis elegans.